Reading from the N-terminus, the 156-residue chain is Transcriptional repressor NrdR (156 aa).

A zinc finger spans residues 3–34 (CPFCGSMDTRVLDSRPTLDGAAIRRRRECISC). Positions 49 to 139 (VLVIKKDGRR…VYRDFREVDQ (91 aa)) constitute an ATP-cone domain.

The protein belongs to the NrdR family. Zn(2+) is required as a cofactor.

Its function is as follows. Negatively regulates transcription of bacterial ribonucleotide reductase nrd genes and operons by binding to NrdR-boxes. The protein is Transcriptional repressor NrdR of Thermotoga neapolitana (strain ATCC 49049 / DSM 4359 / NBRC 107923 / NS-E).